The chain runs to 384 residues: 8-amino-7-oxononanoate synthase (384 aa).

Arg21 is a substrate binding site. 108-109 serves as a coordination point for pyridoxal 5'-phosphate; the sequence is GF. A substrate-binding site is contributed by His133. Residues Ser179, His207, and Thr233 each contribute to the pyridoxal 5'-phosphate site. N6-(pyridoxal phosphate)lysine is present on Lys236. Thr352 serves as a coordination point for substrate.

It belongs to the class-II pyridoxal-phosphate-dependent aminotransferase family. BioF subfamily. As to quaternary structure, homodimer. Pyridoxal 5'-phosphate serves as cofactor.

The catalysed reaction is 6-carboxyhexanoyl-[ACP] + L-alanine + H(+) = (8S)-8-amino-7-oxononanoate + holo-[ACP] + CO2. It participates in cofactor biosynthesis; biotin biosynthesis. Catalyzes the decarboxylative condensation of pimeloyl-[acyl-carrier protein] and L-alanine to produce 8-amino-7-oxononanoate (AON), [acyl-carrier protein], and carbon dioxide. The sequence is that of 8-amino-7-oxononanoate synthase from Shigella boydii serotype 18 (strain CDC 3083-94 / BS512).